The following is a 398-amino-acid chain: Protochlorophyllide reductase, chloroplastic (398 aa).

It belongs to the short-chain dehydrogenases/reductases (SDR) family. POR subfamily.

The protein resides in the plastid. It localises to the chloroplast. It catalyses the reaction chlorophyllide a + NADP(+) = protochlorophyllide a + NADPH + H(+). The protein operates within porphyrin-containing compound metabolism; chlorophyll biosynthesis. Its function is as follows. Phototransformation of protochlorophyllide (Pchlide) to chlorophyllide (Chlide). The protein is Protochlorophyllide reductase, chloroplastic (POR1) of Daucus carota (Wild carrot).